Here is a 152-residue protein sequence, read N- to C-terminus: Methylglyoxal synthase (152 aa).

Residues 1–152 (MELTTRTIAA…YDRYLQQRLK (152 aa)) enclose the MGS-like domain. Residues His-19, Lys-23, 45–48 (TGTT), and 65–66 (SG) each bind substrate. Asp-71 acts as the Proton donor/acceptor in catalysis. His-98 contributes to the substrate binding site.

Belongs to the methylglyoxal synthase family.

The enzyme catalyses dihydroxyacetone phosphate = methylglyoxal + phosphate. Functionally, catalyzes the formation of methylglyoxal from dihydroxyacetone phosphate. The chain is Methylglyoxal synthase from Yersinia enterocolitica serotype O:8 / biotype 1B (strain NCTC 13174 / 8081).